We begin with the raw amino-acid sequence, 325 residues long: Golgi to ER traffic protein 4 homolog B (325 aa).

Disordered regions lie at residues 1–22 (MAAA…GGVQ) and 306–325 (SGED…IELD). Acidic residues predominate over residues 307–317 (GEDDDVEDGQE).

Belongs to the GET4 family. In terms of assembly, component of the bag6/bat3 complex.

It is found in the cytoplasm. The protein resides in the cytosol. Its function is as follows. As part of a cytosolic protein quality control complex, the bag6/bat3 complex, maintains misfolded and hydrophobic patches-containing proteins in a soluble state and participates in their proper delivery to the endoplasmic reticulum or alternatively can promote their sorting to the proteasome where they undergo degradation. The bag6/bat3 complex is involved in the post-translational delivery of tail-anchored/type II transmembrane proteins to the endoplasmic reticulum membrane. Similarly, the bag6/bat3 complex also functions as a sorting platform for proteins of the secretory pathway that are mislocalized to the cytosol either delivering them to the proteasome for degradation or to the endoplasmic reticulum. The bag6/bat3 complex also plays a role in the endoplasmic reticulum-associated degradation (ERAD), a quality control mechanism that eliminates unwanted proteins of the endoplasmic reticulum through their retrotranslocation to the cytosol and their targeting to the proteasome. It maintains these retrotranslocated proteins in an unfolded yet soluble state condition in the cytosol to ensure their proper delivery to the proteasome. The sequence is that of Golgi to ER traffic protein 4 homolog B (get4-b) from Xenopus laevis (African clawed frog).